The following is a 467-amino-acid chain: 5'-nucleotidase domain-containing protein 1 (467 aa).

Asp16 (nucleophile) is an active-site residue. Asp16 and Asp18 together coordinate Mg(2+). The Proton donor role is filled by Asp18. Lys181 bears the N6-acetyllysine mark. Asp323 provides a ligand contact to Mg(2+).

This sequence belongs to the 5'(3')-deoxyribonucleotidase family.

This is 5'-nucleotidase domain-containing protein 1 (Nt5dc1) from Mus musculus (Mouse).